Consider the following 353-residue polypeptide: Probable arabinan endo-1,5-alpha-L-arabinosidase B (353 aa).

Residues 1 to 16 form the signal peptide; it reads MVLVATLFSLFTVSLC. The active-site Proton acceptor is D39. N194 carries N-linked (GlcNAc...) asparagine glycosylation. Residues 202-227 are disordered; it reads HLAKHPKTERVNSQDQNPDPLCRDSS. Catalysis depends on E233, which acts as the Proton donor.

It belongs to the glycosyl hydrolase 43 family.

It localises to the secreted. The enzyme catalyses Endohydrolysis of (1-&gt;5)-alpha-arabinofuranosidic linkages in (1-&gt;5)-arabinans.. It participates in glycan metabolism; L-arabinan degradation. Its function is as follows. Endo-1,5-alpha-L-arabinanase involved in degradation of pectin. Its preferred substrate is linear 1,5-alpha-L-arabinan. The polypeptide is Probable arabinan endo-1,5-alpha-L-arabinosidase B (abnB) (Aspergillus oryzae (strain ATCC 42149 / RIB 40) (Yellow koji mold)).